A 128-amino-acid polypeptide reads, in one-letter code: MGIQGGSVLFGLLLVLAVFCHSGHSLQCYNCPNPTTDCKTAINCSSGFDTCLIARAGLQVYNQCWKFANCNYNDISTLLKESELRYFCCKKDLCNFNEQLESGGTSLSEKTVVLLVTPLLAAAWCLHP.

An N-terminal signal peptide occupies residues 1 to 25 (MGIQGGSVLFGLLLVLAVFCHSGHS). The UPAR/Ly6 domain maps to 26–108 (LQCYNCPNPT…QLESGGTSLS (83 aa)). 5 disulfides stabilise this stretch: cysteine 28–cysteine 51, cysteine 31–cysteine 38, cysteine 44–cysteine 64, cysteine 70–cysteine 88, and cysteine 89–cysteine 94. A glycan (N-linked (GlcNAc...) asparagine) is linked at asparagine 43. The GPI-anchor amidated serine moiety is linked to residue serine 102. A propeptide spans 103–128 (GGTSLSEKTVVLLVTPLLAAAWCLHP) (removed in mature form).

Interacts with T-cell surface antigen CD2. In terms of processing, N- and O-glycosylated.

It localises to the cell membrane. The protein localises to the secreted. In terms of biological role, potent inhibitor of the complement membrane attack complex (MAC) action, which protects self-cells from damage during complement activation. Acts by binding to the beta-haipins of C8 (C8A and C8B) components of the assembling MAC, forming an intermolecular beta-sheet that prevents incorporation of the multiple copies of C9 required for complete formation of the osmolytic pore. The protein is CD59 glycoprotein (CD59) of Macaca fascicularis (Crab-eating macaque).